The following is a 179-amino-acid chain: MSTGSLSDVEDLQEVEMLECDGLKMDSNKEFVTSNESTEESSNCENGSPQKGRGGLGKRRKAPTKKSPLSGVSQEGKQVQRNAANARERARMRVLSKAFSRLKTTLPWVPPDTKLSKLDTLRLASSYIAHLRQILANDKYENGYIHPVNLTWPFMVAGKPESDLKEVVTASRLCGTTAS.

A disordered region spans residues 20 to 87; the sequence is CDGLKMDSNK…QVQRNAANAR (68 aa). A compositionally biased stretch (low complexity) spans 33 to 46; that stretch reads TSNESTEESSNCEN. Over residues 70-80 the composition is skewed to polar residues; it reads SGVSQEGKQVQ. Residues 79 to 131 enclose the bHLH domain; that stretch reads VQRNAANARERARMRVLSKAFSRLKTTLPWVPPDTKLSKLDTLRLASSYIAHL.

In terms of assembly, efficient DNA binding requires dimerization with another bHLH protein. Forms a heterodimer with TCF3 and binds the E box (5'-CANNTG-3').

It is found in the nucleus. Functionally, involved in epithelial-mesenchymal interactions in kidney and lung morphogenesis that include epithelial differentiation and branching morphogenesis. May play a role in the specification or differentiation of one or more subsets of epicardial cell types. In Homo sapiens (Human), this protein is Transcription factor 21 (TCF21).